Consider the following 431-residue polypeptide: Gamma-glutamyl phosphate reductase (431 aa).

This sequence belongs to the gamma-glutamyl phosphate reductase family.

The protein localises to the cytoplasm. The catalysed reaction is L-glutamate 5-semialdehyde + phosphate + NADP(+) = L-glutamyl 5-phosphate + NADPH + H(+). It functions in the pathway amino-acid biosynthesis; L-proline biosynthesis; L-glutamate 5-semialdehyde from L-glutamate: step 2/2. Catalyzes the NADPH-dependent reduction of L-glutamate 5-phosphate into L-glutamate 5-semialdehyde and phosphate. The product spontaneously undergoes cyclization to form 1-pyrroline-5-carboxylate. This is Gamma-glutamyl phosphate reductase from Acaryochloris marina (strain MBIC 11017).